Here is a 39-residue protein sequence, read N- to C-terminus: RapF inhibitor (39 aa).

The propeptide occupies 1-34 (MKLKSKLLLSCLALSTVFVATTIANAPTHQIEVA).

This sequence belongs to the Phr family. As to quaternary structure, interacts with RapF and inhibits its interaction with ComA. Contains a predicted signal peptide cleavage site in the N-terminal region, however the propeptide is probably subject to only one processing event, at the N-terminal end of the mature peptide.

It localises to the secreted. Its subcellular location is the cytoplasm. Its function is as follows. Signaling molecule involved in the regulation of genetic competence development. Secreted during production, but the mature peptide acts intracellularly, indicating that it needs to be imported into the cell to function. Stimulates expression of the genes controlled by ComA, a transcriptional factor that regulates the development of genetic competence. Acts by inhibiting RapF, which regulates the activity of ComA. In Bacillus subtilis (strain 168), this protein is RapF inhibitor (phrF).